A 617-amino-acid chain; its full sequence is 1-deoxy-D-xylulose-5-phosphate synthase (617 aa).

Thiamine diphosphate is bound by residues His76 and 117–119; that span reads GHS. Mg(2+) is bound at residue Asp148. Thiamine diphosphate contacts are provided by residues 149–150, Asn177, Tyr285, and Glu366; that span reads GA. Mg(2+) is bound at residue Asn177.

Belongs to the transketolase family. DXPS subfamily. Homodimer. Requires Mg(2+) as cofactor. Thiamine diphosphate is required as a cofactor.

It catalyses the reaction D-glyceraldehyde 3-phosphate + pyruvate + H(+) = 1-deoxy-D-xylulose 5-phosphate + CO2. The protein operates within metabolic intermediate biosynthesis; 1-deoxy-D-xylulose 5-phosphate biosynthesis; 1-deoxy-D-xylulose 5-phosphate from D-glyceraldehyde 3-phosphate and pyruvate: step 1/1. Catalyzes the acyloin condensation reaction between C atoms 2 and 3 of pyruvate and glyceraldehyde 3-phosphate to yield 1-deoxy-D-xylulose-5-phosphate (DXP). This chain is 1-deoxy-D-xylulose-5-phosphate synthase, found in Histophilus somni (strain 2336) (Haemophilus somnus).